The sequence spans 132 residues: Ribosome-binding factor A (132 aa).

The protein belongs to the RbfA family. Monomer. Binds 30S ribosomal subunits, but not 50S ribosomal subunits or 70S ribosomes.

The protein localises to the cytoplasm. One of several proteins that assist in the late maturation steps of the functional core of the 30S ribosomal subunit. Associates with free 30S ribosomal subunits (but not with 30S subunits that are part of 70S ribosomes or polysomes). Required for efficient processing of 16S rRNA. May interact with the 5'-terminal helix region of 16S rRNA. The polypeptide is Ribosome-binding factor A (Burkholderia lata (strain ATCC 17760 / DSM 23089 / LMG 22485 / NCIMB 9086 / R18194 / 383)).